We begin with the raw amino-acid sequence, 320 residues long: Lipoyl synthase (320 aa).

Residues 1–26 (MVTVVDRVTSRRLRHPEKMHRPDTSI) form a disordered region. Residues cysteine 59, cysteine 64, cysteine 70, cysteine 85, cysteine 89, cysteine 92, and serine 298 each coordinate [4Fe-4S] cluster. The Radical SAM core domain maps to 71–287 (WSQRHASFMI…AKIGKVKGFL (217 aa)).

The protein belongs to the radical SAM superfamily. Lipoyl synthase family. [4Fe-4S] cluster is required as a cofactor.

It localises to the cytoplasm. The enzyme catalyses [[Fe-S] cluster scaffold protein carrying a second [4Fe-4S](2+) cluster] + N(6)-octanoyl-L-lysyl-[protein] + 2 oxidized [2Fe-2S]-[ferredoxin] + 2 S-adenosyl-L-methionine + 4 H(+) = [[Fe-S] cluster scaffold protein] + N(6)-[(R)-dihydrolipoyl]-L-lysyl-[protein] + 4 Fe(3+) + 2 hydrogen sulfide + 2 5'-deoxyadenosine + 2 L-methionine + 2 reduced [2Fe-2S]-[ferredoxin]. It functions in the pathway protein modification; protein lipoylation via endogenous pathway; protein N(6)-(lipoyl)lysine from octanoyl-[acyl-carrier-protein]: step 2/2. In terms of biological role, catalyzes the radical-mediated insertion of two sulfur atoms into the C-6 and C-8 positions of the octanoyl moiety bound to the lipoyl domains of lipoate-dependent enzymes, thereby converting the octanoylated domains into lipoylated derivatives. The protein is Lipoyl synthase of Bartonella quintana (strain Toulouse) (Rochalimaea quintana).